A 30-amino-acid polypeptide reads, in one-letter code: GWKDWLNKAKDFIKEKGPEILRAAANAAIN.

Belongs to the ponericin-G family. Expressed by the venom gland.

It localises to the secreted. It is found in the target cell membrane. Functionally, membrane-perturbating peptide with multiple activities. It is insecticidal, since it induces contractile paralysis in insects (L.cuprina) during several hours and death after 24 hours. It shows a relatively strong and broad-spectrum antibacterial activity against both Gram-positive and Gram-negative bacteria (MIC&lt;20 uM). It is also antiparasitic, since it potently inhibits the larval development of the major pathogenic nematode of ruminants (H.contortus, IC(50)=5.6 uM) and reduces the motility of adult males of the other nematode B.malayi. It also shows cytotoxic activity against HEK293 cells (EC(50)=5-7 uM) but does not induce hemolysis in human erythrocytes. In addition, it causes a moderate increase in intracellular calcium concentration on neuronal and epithelial cell lines, which supports a non-specific membrane perturbation mechanism of action. In vivo, it induces pain by intraplantar injection into mice, suggesting a defensive function against vertebrate predators. This chain is M-poneritoxin-Nc3a, found in Neoponera commutata (Large hunting ant).